The primary structure comprises 424 residues: Glutamyl-tRNA reductase (424 aa).

Residues 49–52, S105, 110–112, and Q116 contribute to the substrate site; these read TCNR and EPQ. C50 serves as the catalytic Nucleophile. 185 to 190 lines the NADP(+) pocket; that stretch reads GSGETA.

This sequence belongs to the glutamyl-tRNA reductase family. Homodimer.

The enzyme catalyses (S)-4-amino-5-oxopentanoate + tRNA(Glu) + NADP(+) = L-glutamyl-tRNA(Glu) + NADPH + H(+). It participates in porphyrin-containing compound metabolism; protoporphyrin-IX biosynthesis; 5-aminolevulinate from L-glutamyl-tRNA(Glu): step 1/2. In terms of biological role, catalyzes the NADPH-dependent reduction of glutamyl-tRNA(Glu) to glutamate 1-semialdehyde (GSA). This is Glutamyl-tRNA reductase from Legionella pneumophila (strain Paris).